The following is a 298-amino-acid chain: Protein transport protein SEC13-1 (298 aa).

6 WD repeats span residues 7–46, 51–92, 97–138, 143–196, 203–245, and 253–292; these read AHNDLIHDAVLDYYGKKLATCSSDKTIKIFEVEGESHKLV, GHEG…WSQI, VHTA…TATP, AHAI…QSYL, GHSD…GPWV, and EFPDVLWRASWSLSGNILAISGGDNKVTLWKENLNGKWES.

This sequence belongs to the WD repeat SEC13 family. As to quaternary structure, the COPII coat is composed of at least 5 proteins: the SEC23/24 complex, the SEC13/31 complex, and the protein SAR1. Component of the nuclear pore complex (NPC). NPC constitutes the exclusive means of nucleocytoplasmic transport. NPCs allow the passive diffusion of ions and small molecules and the active, nuclear transport receptor-mediated bidirectional transport of macromolecules such as proteins, RNAs, ribonucleoparticles (RNPs), and ribosomal subunits across the nuclear envelope. Due to its 8-fold rotational symmetry, all subunits are present with 8 copies or multiples thereof.

The protein resides in the cytoplasmic vesicle. The protein localises to the COPII-coated vesicle membrane. It localises to the endoplasmic reticulum membrane. It is found in the nucleus. Its subcellular location is the nuclear pore complex. In terms of biological role, component of the coat protein complex II (COPII) which promotes the formation of transport vesicles from the endoplasmic reticulum (ER). The coat has two main functions, the physical deformation of the endoplasmic reticulum membrane into vesicles and the selection of cargo molecules. It also functions as a component of the nuclear pore complex (NPC). NPC components, collectively referred to as nucleoporins (NUPs), can play the role of both NPC structural components and of docking or interaction partners for transiently associated nuclear transport factors. SEC13 is required for efficient mRNA export from the nucleus to the cytoplasm and for correct nuclear pore biogenesis and distribution. This chain is Protein transport protein SEC13-1 (SEC131), found in Candida glabrata (strain ATCC 2001 / BCRC 20586 / JCM 3761 / NBRC 0622 / NRRL Y-65 / CBS 138) (Yeast).